Here is a 113-residue protein sequence, read N- to C-terminus: Nucleoid-associated protein Athe_1143 (113 aa).

It belongs to the YbaB/EbfC family. Homodimer.

It is found in the cytoplasm. The protein resides in the nucleoid. Functionally, binds to DNA and alters its conformation. May be involved in regulation of gene expression, nucleoid organization and DNA protection. The polypeptide is Nucleoid-associated protein Athe_1143 (Caldicellulosiruptor bescii (strain ATCC BAA-1888 / DSM 6725 / KCTC 15123 / Z-1320) (Anaerocellum thermophilum)).